A 156-amino-acid chain; its full sequence is MNLNATLIGQLIAFALFTWFCVKFVWPPIIKAIEERQSSIANALASAEKAKQDQADSQAAVEQEILAAKEEAQKIIDLANKRRNDILEEVKTEAENLKATIIAQGHAEVEAERKRVQEELRVKVASLAIAGAEKIVGRTVDEAANNDIIDKLVAEL.

A helical transmembrane segment spans residues 7–29 (LIGQLIAFALFTWFCVKFVWPPI).

Belongs to the ATPase B chain family. In terms of assembly, F-type ATPases have 2 components, F(1) - the catalytic core - and F(0) - the membrane proton channel. F(1) has five subunits: alpha(3), beta(3), gamma(1), delta(1), epsilon(1). F(0) has three main subunits: a(1), b(2) and c(10-14). The alpha and beta chains form an alternating ring which encloses part of the gamma chain. F(1) is attached to F(0) by a central stalk formed by the gamma and epsilon chains, while a peripheral stalk is formed by the delta and b chains.

It is found in the cell inner membrane. Functionally, f(1)F(0) ATP synthase produces ATP from ADP in the presence of a proton or sodium gradient. F-type ATPases consist of two structural domains, F(1) containing the extramembraneous catalytic core and F(0) containing the membrane proton channel, linked together by a central stalk and a peripheral stalk. During catalysis, ATP synthesis in the catalytic domain of F(1) is coupled via a rotary mechanism of the central stalk subunits to proton translocation. Its function is as follows. Component of the F(0) channel, it forms part of the peripheral stalk, linking F(1) to F(0). The chain is ATP synthase subunit b from Mannheimia succiniciproducens (strain KCTC 0769BP / MBEL55E).